We begin with the raw amino-acid sequence, 126 residues long: Protein ApaG (126 aa).

Residues 2 to 126 (NQRLSPIKVE…FSLAVPGLLH (125 aa)) enclose the ApaG domain.

In Shewanella piezotolerans (strain WP3 / JCM 13877), this protein is Protein ApaG.